An 834-amino-acid chain; its full sequence is Ras GTPase-activating protein 3 (834 aa).

C2 domains are found at residues 1–112 (MAVE…DTWF) and 123–263 (VQGK…EAWY). Ala2 carries the post-translational modification N-acetylalanine. Tyr66 is modified (phosphotyrosine). At Ser77 the chain carries Phosphoserine. Thr110 is modified (phosphothreonine). The region spanning 346 to 561 (GRVVPFISAI…DAVKNFLDLI (216 aa)) is the Ras-GAP domain. The PH domain maps to 576 to 677 (ILLKEGFMIK…WIDILTKVSQ (102 aa)). The Btk-type zinc-finger motif lies at 679–715 (NQKRLAVYHPSAYLNGHWLCCRASSDTAAGCSPCTGG). Zn(2+) is bound by residues His687, Cys698, Cys699, and Cys709. Residues 806-834 (KYGSQEHPIGDKSFQSYIRQQSETPAHSM) form a disordered region. Phosphoserine occurs at positions 809 and 833. Residues 818–834 (SFQSYIRQQSETPAHSM) show a composition bias toward polar residues.

Its function is as follows. Inhibitory regulator of the Ras-cyclic AMP pathway. May bind inositol tetrakisphosphate (IP4). In Bos taurus (Bovine), this protein is Ras GTPase-activating protein 3 (RASA3).